The primary structure comprises 353 residues: Photosystem II D2 protein (353 aa).

Position 2 is an N-acetylthreonine (T2). T2 carries the phosphothreonine modification. The helical transmembrane segment at 41 to 61 (CAYFALGGWLTGTTFVTSWYT) threads the bilayer. Position 118 (H118) interacts with chlorophyll a. A helical transmembrane segment spans residues 125–141 (GFMLRQFEIARSVQLRP). Pheophytin a-binding residues include Q130 and N143. Residues 153–166 (VFVSVFLIYPLGQS) form a helical membrane-spanning segment. Chlorophyll a is bound at residue H198. The helical transmembrane segment at 208–228 (AALLCAIHGATVENTIFEDGD) threads the bilayer. Residues H215 and F262 each contribute to the a plastoquinone site. Residue H215 participates in Fe cation binding. H269 contacts Fe cation. The chain crosses the membrane as a helical span at residues 279 to 295 (GLWMSAVGVVGLAVNLR).

Belongs to the reaction center PufL/M/PsbA/D family. In terms of assembly, PSII is composed of 1 copy each of membrane proteins PsbA, PsbB, PsbC, PsbD, PsbE, PsbF, PsbH, PsbI, PsbJ, PsbK, PsbL, PsbM, PsbT, PsbX, PsbY, PsbZ, Psb30/Ycf12, at least 3 peripheral proteins of the oxygen-evolving complex and a large number of cofactors. It forms dimeric complexes. It depends on The D1/D2 heterodimer binds P680, chlorophylls that are the primary electron donor of PSII, and subsequent electron acceptors. It shares a non-heme iron and each subunit binds pheophytin, quinone, additional chlorophylls, carotenoids and lipids. There is also a Cl(-1) ion associated with D1 and D2, which is required for oxygen evolution. The PSII complex binds additional chlorophylls, carotenoids and specific lipids. as a cofactor.

It localises to the plastid. It is found in the chloroplast thylakoid membrane. It catalyses the reaction 2 a plastoquinone + 4 hnu + 2 H2O = 2 a plastoquinol + O2. Its function is as follows. Photosystem II (PSII) is a light-driven water:plastoquinone oxidoreductase that uses light energy to abstract electrons from H(2)O, generating O(2) and a proton gradient subsequently used for ATP formation. It consists of a core antenna complex that captures photons, and an electron transfer chain that converts photonic excitation into a charge separation. The D1/D2 (PsbA/PsbD) reaction center heterodimer binds P680, the primary electron donor of PSII as well as several subsequent electron acceptors. D2 is needed for assembly of a stable PSII complex. In Chaetosphaeridium globosum (Charophycean green alga), this protein is Photosystem II D2 protein.